A 275-amino-acid chain; its full sequence is NH(3)-dependent NAD(+) synthetase (275 aa).

46 to 53 contacts ATP; the sequence is GISGGQDS. Asp-52 contributes to the Mg(2+) binding site. Arg-140 is a binding site for deamido-NAD(+). Thr-160 is a binding site for ATP. Glu-165 is a binding site for Mg(2+). Deamido-NAD(+) contacts are provided by Lys-173 and Asp-180. Residues Lys-189 and Thr-211 each contribute to the ATP site. 260–261 lines the deamido-NAD(+) pocket; it reads HK.

It belongs to the NAD synthetase family. As to quaternary structure, homodimer.

It catalyses the reaction deamido-NAD(+) + NH4(+) + ATP = AMP + diphosphate + NAD(+) + H(+). The protein operates within cofactor biosynthesis; NAD(+) biosynthesis; NAD(+) from deamido-NAD(+) (ammonia route): step 1/1. In terms of biological role, catalyzes the ATP-dependent amidation of deamido-NAD to form NAD. Uses ammonia as a nitrogen source. The polypeptide is NH(3)-dependent NAD(+) synthetase (Erwinia tasmaniensis (strain DSM 17950 / CFBP 7177 / CIP 109463 / NCPPB 4357 / Et1/99)).